We begin with the raw amino-acid sequence, 332 residues long: 2-oxoglutarate-dependent dioxygenase ecdK (332 aa).

The Fe2OG dioxygenase domain occupies 178 to 294 (HASELRLNHY…RRSVAFFLKP (117 aa)). Histidine 206, aspartate 208, and histidine 266 together coordinate Fe cation. A 2-oxoglutarate-binding site is contributed by arginine 285.

This sequence belongs to the iron/ascorbate-dependent oxidoreductase family. Fe(2+) is required as a cofactor.

It participates in antifungal biosynthesis. In terms of biological role, 2-oxoglutarate-dependent dioxygenase; part of the gene cluster that mediates the biosynthesis of echinocandin B, a fungal lipidated cyclic hexapeptide that acts as an antifungal agent. Linoleoyl-AMP, produced by the fatty-acyl-AMP ligase ecdI, is transferred to the initiation carrier domain (T0) of ecdA. The linoleoyl-S-phosphopantetheinyl-T0 is sequentially extended with L-ornithine, L-threonine, L-proline, L-homotyrosine, L-threonine, and 4R-methyl-L-proline to form the linear hexapeptide. Thereafter, the terminal condensation (C7) performs macrocyclization of the NRPS product and the cyclic scaffold is released from ecdA. All six of the amino acid residues are hydroxylated, including 4R,5R-dihydroxy-L-ornithine, 4R-hydroxyl-L-proline, 3S,4S-dihydroxy-L-homotyrosine, and 3S-hydroxyl-4S-methyl-L-prolin. In the pathway, all the hydroxylation reactions are proposed to occur following completion of the cyclic peptide, so the unhydroxylated precursor produced by ecdA will undergo six rounds of hydroxylation. Five hydroxylase genes (ecdG, ecdH, ecdK, htyE and htyF) are embedded within the echinocandin B (ecd) and L-homotyrosine (hty) clusters. The protein is 2-oxoglutarate-dependent dioxygenase ecdK of Aspergillus rugulosus (Emericella rugulosa).